The primary structure comprises 248 residues: Probable phosphatase Sfri_3709 (248 aa).

Positions 8, 10, 16, 41, 74, 102, 132, 193, and 195 each coordinate Zn(2+).

This sequence belongs to the PHP family. Zn(2+) serves as cofactor.

This Shewanella frigidimarina (strain NCIMB 400) protein is Probable phosphatase Sfri_3709.